The sequence spans 458 residues: Protein adenylyltransferase FICD (458 aa).

Residues 1-23 are Cytoplasmic-facing; the sequence is MILMPMASVVAVAEPKWVSVWGR. A helical; Signal-anchor for type II membrane protein transmembrane segment spans residues 24-44; sequence FLWMALLSMALGSLLALLLPL. At 45-458 the chain is on the lumenal side; the sequence is GVVEEHCLAV…GFKETLPVRP (414 aa). Thr-80 is modified (O-AMP-threonine; by autocatalysis). TPR repeat units follow at residues 106 to 139 and 140 to 173; these read AKAA…DPGF and VDAL…SPFH. Thr-183 is subject to O-AMP-threonine; by autocatalysis. Positions 230–235 match the Inhibitory (S/T)XXXE(G/N) motif motif; that stretch reads TVAIEG. Glu-234 provides a ligand contact to ATP. A glycan (N-linked (GlcNAc...) asparagine) is linked at Asn-275. A Fido domain is found at 285-420; sequence VTMDDMLEIH…VRPFIRFIAK (136 aa). An ATP-binding site is contributed by 316–319; the sequence is VGHH. His-363 is a catalytic residue. ATP-binding positions include 367-374, 399-400, and Asn-407; these read DGNGRTSR and YY.

It belongs to the fic family. As to quaternary structure, homodimer. Interacts with HD. The cofactor is Mg(2+). Mn(2+) is required as a cofactor. Post-translationally, auto-AMPylated in vitro.

The protein localises to the endoplasmic reticulum membrane. The catalysed reaction is L-tyrosyl-[protein] + ATP = O-(5'-adenylyl)-L-tyrosyl-[protein] + diphosphate. It carries out the reaction 3-O-(5'-adenylyl)-L-threonyl-[protein] + H2O = L-threonyl-[protein] + AMP + H(+). The enzyme catalyses L-threonyl-[protein] + ATP = 3-O-(5'-adenylyl)-L-threonyl-[protein] + diphosphate. The side chain of Glu-234 determines which of the two opposing activities (AMPylase or de-AMPylase) will take place. In response to endoplasmic reticulum stress, mediates de-AMPylase activity. Adenylyltransferase activity is inhibited by the inhibitory helix present at the N-terminus: Glu-234 binds ATP and competes with ATP-binding at Arg-374, thereby preventing adenylyltransferase activity. In unstressed cells, disengagement of Glu-234 promotes adenylyltransferase activity. Activation dissociates ATP-binding from Glu-234, allowing ordered binding of the entire ATP moiety with the alpha-phosphate in an orientation that is productive for accepting an incoming target hydroxyl side chain. Functionally, protein that can both mediate the addition of adenosine 5'-monophosphate (AMP) to specific residues of target proteins (AMPylation), and the removal of the same modification from target proteins (de-AMPylation), depending on the context. The side chain of Glu-231 determines which of the two opposing activities (AMPylase or de-AMPylase) will take place. Acts as a key regulator of the ERN1/IRE1-mediated unfolded protein response (UPR) by mediating AMPylation or de-AMPylation of HSPA5/BiP. In unstressed cells, acts as an adenylyltransferase by mediating AMPylation of HSPA5/BiP at 'Thr-518', thereby inactivating it. In response to endoplasmic reticulum stress, acts as a phosphodiesterase by mediating removal of ATP (de-AMPylation) from HSPA5/BiP at 'Thr-518', leading to restore HSPA5/BiP activity. Although it is able to AMPylate RhoA, Rac and Cdc42 Rho GTPases in vitro, Rho GTPases do not constitute physiological substrates. The sequence is that of Protein adenylyltransferase FICD from Mus musculus (Mouse).